Here is a 135-residue protein sequence, read N- to C-terminus: Ribonuclease VapC35 (135 aa).

The PINc domain occupies 2–123 (IYLETSALVK…DNRLKEAAEA (122 aa)). Glu-5 and Asp-91 together coordinate Mg(2+).

It belongs to the PINc/VapC protein family. Mg(2+) serves as cofactor.

Toxic component of a type II toxin-antitoxin (TA) system. An RNase. Its toxic effect is neutralized by coexpression with cognate antitoxin VapB35. This is Ribonuclease VapC35 from Mycobacterium tuberculosis (strain CDC 1551 / Oshkosh).